The sequence spans 96 residues: Large ribosomal subunit protein bL28 (96 aa).

It belongs to the bacterial ribosomal protein bL28 family.

The protein is Large ribosomal subunit protein bL28 of Methylobacterium sp. (strain 4-46).